The primary structure comprises 259 residues: Putative zinc metalloprotease Rip2 (259 aa).

The next 2 membrane-spanning stretches (helical) occupy residues P14–G34 and P39–L59. H60 serves as a coordination point for Zn(2+). E61 is a catalytic residue. H64 contributes to the Zn(2+) binding site. 4 helical membrane passes run G97 to V117, T128 to A148, I156 to V176, and L211 to V231.

The protein belongs to the peptidase M50B family. Requires Zn(2+) as cofactor.

The protein localises to the cell membrane. The polypeptide is Putative zinc metalloprotease Rip2 (rip2) (Mycobacterium tuberculosis (strain ATCC 25618 / H37Rv)).